The primary structure comprises 205 residues: ATP phosphoribosyltransferase (205 aa).

This sequence belongs to the ATP phosphoribosyltransferase family. Short subfamily. As to quaternary structure, heteromultimer composed of HisG and HisZ subunits.

The protein localises to the cytoplasm. It catalyses the reaction 1-(5-phospho-beta-D-ribosyl)-ATP + diphosphate = 5-phospho-alpha-D-ribose 1-diphosphate + ATP. The protein operates within amino-acid biosynthesis; L-histidine biosynthesis; L-histidine from 5-phospho-alpha-D-ribose 1-diphosphate: step 1/9. In terms of biological role, catalyzes the condensation of ATP and 5-phosphoribose 1-diphosphate to form N'-(5'-phosphoribosyl)-ATP (PR-ATP). Has a crucial role in the pathway because the rate of histidine biosynthesis seems to be controlled primarily by regulation of HisG enzymatic activity. This chain is ATP phosphoribosyltransferase, found in Ruthia magnifica subsp. Calyptogena magnifica.